Reading from the N-terminus, the 212-residue chain is Ras-related protein Rab-15 (212 aa).

Serine 17, glycine 18, valine 19, glycine 20, lysine 21, threonine 22, cysteine 23, serine 35, serine 39, and threonine 40 together coordinate GTP. Threonine 22 lines the Mg(2+) pocket. Short sequence motifs (switch) lie at residues 31–45 (NEFH…GVDF) and 63–80 (DTAG…YYRR). Residues threonine 40 and aspartate 63 each coordinate Mg(2+). 6 residues coordinate GTP: glycine 66, asparagine 121, lysine 122, aspartate 124, serine 151, and alanine 152. A disordered region spans residues 192–212 (ELEEDEGKPEGPANSSKTCWC). S-geranylgeranyl cysteine attachment occurs at residues cysteine 210 and cysteine 212. Cysteine 212 is modified (cysteine methyl ester).

It belongs to the small GTPase superfamily. Rab family. In terms of assembly, the GTP bound form of RAB15 interacts with REP15. Interacts (GTP-bound form) with MICAL1, MICAL3, MICALCL, EHBP1 and EHBP1L1. Requires Mg(2+) as cofactor.

It is found in the cell membrane. It catalyses the reaction GTP + H2O = GDP + phosphate + H(+). With respect to regulation, regulated by guanine nucleotide exchange factors (GEFs) which promote the exchange of bound GDP for free GTP. Regulated by GTPase activating proteins (GAPs) which increase the GTP hydrolysis activity. Inhibited by GDP dissociation inhibitors (GDIs). In terms of biological role, the small GTPases Rab are key regulators of intracellular membrane trafficking, from the formation of transport vesicles to their fusion with membranes. Rabs cycle between an inactive GDP-bound form and an active GTP-bound form that is able to recruit to membranes different sets of downstream effectors directly responsible for vesicle formation, movement, tethering and fusion. RAB15 may act in concert with RAB3A in regulating aspects of synaptic vesicle membrane flow within the nerve terminal. The sequence is that of Ras-related protein Rab-15 (RAB15) from Bos taurus (Bovine).